The sequence spans 133 residues: MNDQSCVRIMTEWDIVAARQLGRNVAKELGFGTVDQARITTAISELARNIYLYAGKGQIGIEQVADRGKKGLKIIAEDQGPGIPDIRKVMEDGFSTSGGLGAGLPGVKRLMDEFSLNSVAGEGTEIQAIKWLR.

It catalyses the reaction L-seryl-[protein] + ATP = O-phospho-L-seryl-[protein] + ADP + H(+). The catalysed reaction is L-threonyl-[protein] + ATP = O-phospho-L-threonyl-[protein] + ADP + H(+). Functionally, provides the crucial link between the upstream module (communication of environmental stress) and the downstream module (integration of the environmental signals with signals of energy stress) that compose the signal transduction pathway controlling the sigma-B factor. Phosphorylates and inactivates its specific antagonist protein RsbS thanks to its serine kinase activity. Upon phosphorylation of RsbS, RsbT is released to stimulate RsbU, a PP2C phosphatase, thereby initiating the signaling cascade that ultimately activates sigma-B. The activity of the RsbU phosphatase may be stimulated by a long-lived interaction with RsbT and the serine kinase function of RsbT is not required to directly modify RsbU. Also phosphorylates RsbR thanks to its threonine kinase activity, preventing it to phosphorylate RsbT. The chain is Serine/threonine-protein kinase RsbT (rsbT) from Bacillus subtilis (strain 168).